A 157-amino-acid chain; its full sequence is Small ribosomal subunit protein bS16 (157 aa).

Positions 114–157 (NEGPTAEAITEKKKKAKEEAAAKAAAEAEAAAKAEEAPAEEAAE) are disordered.

The protein belongs to the bacterial ribosomal protein bS16 family.

The polypeptide is Small ribosomal subunit protein bS16 (Corynebacterium diphtheriae (strain ATCC 700971 / NCTC 13129 / Biotype gravis)).